A 329-amino-acid polypeptide reads, in one-letter code: 4-hydroxythreonine-4-phosphate dehydrogenase (329 aa).

Residues H136 and T137 each contribute to the substrate site. A divalent metal cation contacts are provided by H166, H211, and H266. Substrate is bound by residues K274, N283, and R292.

The protein belongs to the PdxA family. Homodimer. Requires Zn(2+) as cofactor. The cofactor is Mg(2+). Co(2+) is required as a cofactor.

It is found in the cytoplasm. It catalyses the reaction 4-(phosphooxy)-L-threonine + NAD(+) = 3-amino-2-oxopropyl phosphate + CO2 + NADH. It participates in cofactor biosynthesis; pyridoxine 5'-phosphate biosynthesis; pyridoxine 5'-phosphate from D-erythrose 4-phosphate: step 4/5. Its function is as follows. Catalyzes the NAD(P)-dependent oxidation of 4-(phosphooxy)-L-threonine (HTP) into 2-amino-3-oxo-4-(phosphooxy)butyric acid which spontaneously decarboxylates to form 3-amino-2-oxopropyl phosphate (AHAP). This chain is 4-hydroxythreonine-4-phosphate dehydrogenase, found in Escherichia coli O139:H28 (strain E24377A / ETEC).